The following is a 247-amino-acid chain: tRNA (guanine-N(1)-)-methyltransferase (247 aa).

Residues Gly113 and 133–138 (IGDFVM) each bind S-adenosyl-L-methionine.

Belongs to the RNA methyltransferase TrmD family. Homodimer.

It is found in the cytoplasm. The catalysed reaction is guanosine(37) in tRNA + S-adenosyl-L-methionine = N(1)-methylguanosine(37) in tRNA + S-adenosyl-L-homocysteine + H(+). Functionally, specifically methylates guanosine-37 in various tRNAs. This Vibrio campbellii (strain ATCC BAA-1116) protein is tRNA (guanine-N(1)-)-methyltransferase.